Reading from the N-terminus, the 29-residue chain is Cytochrome b6-f complex subunit 8 (29 aa).

A helical transmembrane segment spans residues 3-23 (IVSIGWAALMVVFTFSLSLVV).

It belongs to the PetN family. The 4 large subunits of the cytochrome b6-f complex are cytochrome b6, subunit IV (17 kDa polypeptide, PetD), cytochrome f and the Rieske protein, while the 4 small subunits are PetG, PetL, PetM and PetN. The complex functions as a dimer.

It is found in the plastid. The protein resides in the chloroplast thylakoid membrane. In terms of biological role, component of the cytochrome b6-f complex, which mediates electron transfer between photosystem II (PSII) and photosystem I (PSI), cyclic electron flow around PSI, and state transitions. In Zygnema circumcarinatum (Green alga), this protein is Cytochrome b6-f complex subunit 8.